Consider the following 769-residue polypeptide: MSSNCSCSLLSLFSLLLIIDLTVASSCPKTCGGIDIPYPFGIGTGCYLEKWYEIICVNNSVPFLSIINREVVSISFSDMYRRFFNVGYGSIRIRNPIASKGCSSGGQEFGSLLNMTGYPFYLGDNNMLIAVGCNNTASLTNVEPSIVGCESTCSTNQDIPINDYLGVLYCNARYGDSEYCKNISIMNDTSCNGIGCCKASLPARYQQIIGVEIDDSNTESKGCKVAFITDEEYFLSNGSDPERLHANGYDTVDLRWFIHTANHSFIGSLGCKSIDEYTILRRDNREYGIGCLCDYNSTTTGYATCSCASGFEGNPYIPGECKDINECVRGIDGNPVCTAGKCVNLLGGYTCEYTNHRPLVIGLSTSFSTLVFIGGIYWLYKFIRRQRRLNQKKKFFKRNGGLLLQQQLTTTEGNVDSTRVFNSRELEKATENFSLTRILGEGGQGTVYKGMLVDGRIVAVKKSKVVDEDKLEEFINEVVILSQINHRNIVKLLGCCLETDVPILVYEFIPNGNLFEHLHDDSDDYTMTTWEVRLRIAVDIAGALSYLHSAASSPIYHRDIKSTNIMLDEKHRAKVSDFGTSRTVTVDHTHLTTVVSGTVGYMDPEYFQSSQFTDKSDVYSFGVVLAELITGEKSVSFLRSQEYRTLATYFTLAMKENRLSDIIDARIRDGCKLNQVTAAAKIARKCLNMKGRKRPSMRQVSMELEKIRSYSEDMQPYEYASENEEEKKETLVDVNVESRNYVSVTAASSQYSIATTSSSRSDVEPLFPR.

Positions 1–24 (MSSNCSCSLLSLFSLLLIIDLTVA) are cleaved as a signal peptide. Residues 25–358 (SSCPKTCGGI…YTCEYTNHRP (334 aa)) are Extracellular-facing. Residues Asn-58, Asn-114, Asn-134, Asn-182, Asn-187, Asn-237, Asn-262, and Asn-296 are each glycosylated (N-linked (GlcNAc...) asparagine). The tract at residues 291–351 (CLCDYNSTTT…CVNLLGGYTC (61 aa)) is atypical EGF-like. 3 disulfide bridges follow: Cys-293-Cys-305, Cys-327-Cys-342, and Cys-337-Cys-351. A helical transmembrane segment spans residues 359–379 (LVIGLSTSFSTLVFIGGIYWL). The Cytoplasmic segment spans residues 380 to 769 (YKFIRRQRRL…RSDVEPLFPR (390 aa)). Residues 433–718 (FSLTRILGEG…SYSEDMQPYE (286 aa)) enclose the Protein kinase domain. Residues 439-447 (LGEGGQGTV) and Lys-461 contribute to the ATP site. Tyr-506 carries the post-translational modification Phosphotyrosine. Asp-559 serves as the catalytic Proton acceptor. Phosphothreonine is present on residues Thr-593 and Thr-598. Tyr-606 bears the Phosphotyrosine mark.

This sequence belongs to the protein kinase superfamily. Ser/Thr protein kinase family.

The protein resides in the membrane. It catalyses the reaction L-seryl-[protein] + ATP = O-phospho-L-seryl-[protein] + ADP + H(+). The enzyme catalyses L-threonyl-[protein] + ATP = O-phospho-L-threonyl-[protein] + ADP + H(+). Functionally, serine/threonine-protein kinase that may function as a signaling receptor of extracellular matrix component. The polypeptide is Wall-associated receptor kinase-like 10 (WAKL10) (Arabidopsis thaliana (Mouse-ear cress)).